Here is a 259-residue protein sequence, read N- to C-terminus: BTB/POZ domain-containing protein KCTD4 (259 aa).

The BTB domain maps to 33-134 (TLMTLNVGGY…EVKSRWEKEQ (102 aa)).

The polypeptide is BTB/POZ domain-containing protein KCTD4 (Kctd4) (Mus musculus (Mouse)).